Reading from the N-terminus, the 114-residue chain is Nucleoid-associated protein THEYE_A1069 (114 aa).

Belongs to the YbaB/EbfC family. In terms of assembly, homodimer.

Its subcellular location is the cytoplasm. It is found in the nucleoid. Binds to DNA and alters its conformation. May be involved in regulation of gene expression, nucleoid organization and DNA protection. The sequence is that of Nucleoid-associated protein THEYE_A1069 from Thermodesulfovibrio yellowstonii (strain ATCC 51303 / DSM 11347 / YP87).